The sequence spans 115 residues: U3-lycotoxin-Ls1b (115 aa).

The N-terminal stretch at 1-20 is a signal peptide; it reads MKFVLLFGVLLVTLFSYSSA. Residues 21–44 constitute a propeptide that is removed on maturation; that stretch reads EMLDDFDQADEDELLSLIEKEEAR. Disulfide bonds link cysteine 48/cysteine 63, cysteine 55/cysteine 72, cysteine 62/cysteine 87, and cysteine 74/cysteine 85.

The protein belongs to the neurotoxin 19 (CSTX) family. 01 subfamily. Expressed by the venom gland.

It is found in the secreted. This is U3-lycotoxin-Ls1b from Lycosa singoriensis (Wolf spider).